The sequence spans 344 residues: MIEIRNLSQRFEGPRGWIEALHNVNLTIPQGEVFGIIGRSGAGKSTLVRTINLLTRPSEGNVFVDGRDLTQLSAGELRGARRDIGMIFQHFNLLSSRTVFGNVALPLELAGVKRAEIEATVLPLLDLVGLAAQKDRYPAQISGGQKQRVGIARALASKPKVLLSDEATSALDPETTRAILDLLRRINRELGLTIVLITHQMEVIKDVCDRVAVLDAGRVVEEGNVIDVFMRPHHEVTRALIGDVIAQELPPAMKARVAERLKTGSGHLLRLAFTGSGVDQPILSETIRRYELDFNILHGQIDEIQGRAFGSLAVLATGEPGKVGQAFAYLREQGVVVEELSYVE.

Residues 2 to 241 (IEIRNLSQRF…PHHEVTRALI (240 aa)) form the ABC transporter domain. 38–45 (GRSGAGKS) contacts ATP.

The protein belongs to the ABC transporter superfamily. Methionine importer (TC 3.A.1.24) family. In terms of assembly, the complex is composed of two ATP-binding proteins (MetN), two transmembrane proteins (MetI) and a solute-binding protein (MetQ).

The protein localises to the cell inner membrane. The enzyme catalyses L-methionine(out) + ATP + H2O = L-methionine(in) + ADP + phosphate + H(+). The catalysed reaction is D-methionine(out) + ATP + H2O = D-methionine(in) + ADP + phosphate + H(+). Its function is as follows. Part of the ABC transporter complex MetNIQ involved in methionine import. Responsible for energy coupling to the transport system. This is Methionine import ATP-binding protein MetN from Burkholderia thailandensis (strain ATCC 700388 / DSM 13276 / CCUG 48851 / CIP 106301 / E264).